A 315-amino-acid chain; its full sequence is 1,2-dihydroxy-3,5-cyclohexadiene-1,4-dicarboxylate dehydrogenase (315 aa).

3 residues coordinate a divalent metal cation: H159, H203, and H255.

The protein belongs to the PdxA family.

The catalysed reaction is (3S,4R)-3,4-dihydroxycyclohexa-1,5-diene-1,4-dicarboxylate + NAD(+) = 3,4-dihydroxybenzoate + CO2 + NADH. In terms of biological role, involved in the degradation of terephthalate (TPA) via the protocatechuate (PCA) 4,5-cleavage pathway. Catalyzes the dehydrogenation of 1,2-dihydroxy-3,5-cyclohexadiene-1,4-dicarboxylate (DCD) to yield protocatechuate (PCA). This is 1,2-dihydroxy-3,5-cyclohexadiene-1,4-dicarboxylate dehydrogenase (tphBI) from Comamonas sp.